A 98-amino-acid chain; its full sequence is UPF0235 protein Ping_3043 (98 aa).

This sequence belongs to the UPF0235 family.

This Psychromonas ingrahamii (strain DSM 17664 / CCUG 51855 / 37) protein is UPF0235 protein Ping_3043.